Reading from the N-terminus, the 133-residue chain is MITLFLSPSCTSCRKAKAWLEKHKVPFVEHNIMTSPLTRKELQHILSLTENGTDDIISTRSKIFQKLNIDVESISVSELLHLIEQYPSLLRRPIIIDAKRMQIGFNEDEIRAFLPRSYRKQELKEARMRAGIS.

Residues Cys10 and Cys13 are joined by a disulfide bond.

It belongs to the ArsC family. Spx subfamily. As to quaternary structure, interacts with the C-terminal domain of the alpha subunit of the RNAP.

It localises to the cytoplasm. In terms of biological role, global transcriptional regulator that plays a key role in stress response and exerts either positive or negative regulation of genes. Acts by interacting with the C-terminal domain of the alpha subunit of the RNA polymerase (RNAP). This interaction can enhance binding of RNAP to the promoter region of target genes and stimulate their transcription, or block interaction of RNAP with activator. This is Global transcriptional regulator Spx from Streptococcus pneumoniae serotype 4 (strain ATCC BAA-334 / TIGR4).